The sequence spans 113 residues: Cell cycle protein GpsB (113 aa).

The stretch at 37–63 (KDYETYATLVKSLRQEIADLKEELTRK) forms a coiled coil. A disordered region spans residues 61-82 (TRKPQVSSAPSPSHPDPIDVAA).

This sequence belongs to the GpsB family. Forms polymers through the coiled coil domains. Interacts with PBP1, MreC and EzrA.

The protein resides in the cytoplasm. In terms of biological role, divisome component that associates with the complex late in its assembly, after the Z-ring is formed, and is dependent on DivIC and PBP2B for its recruitment to the divisome. Together with EzrA, is a key component of the system that regulates PBP1 localization during cell cycle progression. Its main role could be the removal of PBP1 from the cell pole after pole maturation is completed. Also contributes to the recruitment of PBP1 to the division complex. Not essential for septum formation. This chain is Cell cycle protein GpsB, found in Streptococcus pneumoniae (strain ATCC 700669 / Spain 23F-1).